The chain runs to 86 residues: Protein Vpu (86 aa).

The Extracellular portion of the chain corresponds to 1 to 8; sequence MDIVQQVG. A helical transmembrane segment spans residues 9 to 29; the sequence is LLVVLIIELVIVIVIWVKVYK. The Cytoplasmic segment spans residues 30 to 86; the sequence is LCKEDRRQKKIDRLIARIRERAEDSGNESDGDTEELQDLITEGDNLMHIGIRDNRNN. Ser54 and Ser58 each carry phosphoserine; by host CK2.

The protein belongs to the HIV-1 VPU protein family. Homopentamer. Interacts with host CD4 and BRTC; these interactions induce proteasomal degradation of CD4. Interacts with host BST2; this interaction leads to the degradation of host BST2. Interacts with host FBXW11. Interacts with host AP1M1; this interaction plays a role in the mistrafficking and subsequent degradation of host BST2. Interacts with host RANBP2; this interaction allows Vpu to down-regulate host BLM sumoylation. Forms pentamers or hexamers. Interacts with host CD4 and BRTC; these interactions induce proteasomal degradation of CD4. Interacts with host BST2; this interaction leads to the degradation of host BST2. Interacts with host FBXW11. Interacts with host AP1M1; this interaction plays a role in the mistrafficking and subsequent degradation of host BST2. Post-translationally, phosphorylated by host CK2. This phosphorylation is necessary for interaction with human BTRC and degradation of CD4.

Its subcellular location is the host membrane. With respect to regulation, ion channel activity is inhibited by hexamethylene amiloride in vitro. Its function is as follows. Enhances virion budding by targeting host CD4 and Tetherin/BST2 to proteasome degradation. Degradation of CD4 prevents any unwanted premature interactions between viral Env and its host receptor CD4 in the endoplasmic reticulum. Degradation of antiretroviral protein Tetherin/BST2 is important for virion budding, as BST2 tethers new viral particles to the host cell membrane. Mechanistically, Vpu bridges either CD4 or BST2 to BTRC, a substrate recognition subunit of the Skp1/Cullin/F-box protein E3 ubiquitin ligase, induces their ubiquitination and subsequent proteasomal degradation. The alteration of the E3 ligase specificity by Vpu seems to promote the degradation of host IKBKB, leading to NF-kappa-B down-regulation and subsequent apoptosis. Acts as a viroporin that forms an oligomeric ion channel in membranes. Modulates the host DNA repair mechanisms to promote degradation of nuclear viral cDNA in cells that are already productively infected in order to suppress immune sensing and proviral hyper-integration (superinfection). Manipulates PML-NBs and modulates SUMOylation of host BLM protein thereby enhancing its DNA-end processing activity toward viral unintegrated linear DNA. Also inhibits RAD52-mediated homologous repair of viral cDNA, preventing the generation of dead-end circular forms of single copies of the long terminal repeat and permitting sustained nucleolytic attack. The protein is Protein Vpu of Pan troglodytes (Chimpanzee).